We begin with the raw amino-acid sequence, 212 residues long: Phosphoribosylglycinamide formyltransferase (212 aa).

Residue glycine 12–asparagine 14 coordinates N(1)-(5-phospho-beta-D-ribosyl)glycinamide. Residues methionine 90–leucine 93 and asparagine 107 each bind (6R)-10-formyltetrahydrofolate. Residue histidine 109 is the Proton donor of the active site.

It belongs to the GART family.

It carries out the reaction N(1)-(5-phospho-beta-D-ribosyl)glycinamide + (6R)-10-formyltetrahydrofolate = N(2)-formyl-N(1)-(5-phospho-beta-D-ribosyl)glycinamide + (6S)-5,6,7,8-tetrahydrofolate + H(+). The protein operates within purine metabolism; IMP biosynthesis via de novo pathway; N(2)-formyl-N(1)-(5-phospho-D-ribosyl)glycinamide from N(1)-(5-phospho-D-ribosyl)glycinamide (10-formyl THF route): step 1/1. Catalyzes the transfer of a formyl group from 10-formyltetrahydrofolate to 5-phospho-ribosyl-glycinamide (GAR), producing 5-phospho-ribosyl-N-formylglycinamide (FGAR) and tetrahydrofolate. The polypeptide is Phosphoribosylglycinamide formyltransferase (Haemophilus influenzae (strain ATCC 51907 / DSM 11121 / KW20 / Rd)).